Consider the following 658-residue polypeptide: Probable transketolase (658 aa).

His-24 contributes to the substrate binding site. Thiamine diphosphate-binding positions include His-64 and 113–115 (GPL). Mg(2+) is bound at residue Asp-154. 2 residues coordinate thiamine diphosphate: Gly-155 and Asn-184. Positions 184 and 186 each coordinate Mg(2+). The substrate site is built by His-259, Arg-354, and Ser-381. His-259 contacts thiamine diphosphate. The Proton donor role is filled by Glu-408. Thiamine diphosphate is bound at residue Phe-434. Substrate-binding residues include His-458, Asp-466, and Arg-517.

The protein belongs to the transketolase family. As to quaternary structure, homodimer. The cofactor is Mg(2+). Ca(2+) is required as a cofactor. It depends on Mn(2+) as a cofactor. Co(2+) serves as cofactor. Requires thiamine diphosphate as cofactor.

The enzyme catalyses D-sedoheptulose 7-phosphate + D-glyceraldehyde 3-phosphate = aldehydo-D-ribose 5-phosphate + D-xylulose 5-phosphate. Necessary for high-efficiency recombination chromosomal DNA during genetic transformation. Its function is as follows. Catalyzes the transfer of a two-carbon ketol group from a ketose donor to an aldose acceptor, via a covalent intermediate with the cofactor thiamine pyrophosphate. The chain is Probable transketolase (tkt) from Streptococcus pneumoniae serotype 4 (strain ATCC BAA-334 / TIGR4).